We begin with the raw amino-acid sequence, 214 residues long: Outer-membrane lipoprotein LolB (214 aa).

Residues 1 to 25 (MNNLKRFTKSIFSCIALSGLLFLGG) form the signal peptide. Cysteine 26 carries N-palmitoyl cysteine lipidation. The S-diacylglycerol cysteine moiety is linked to residue cysteine 26.

It belongs to the LolB family. In terms of assembly, monomer.

It is found in the cell outer membrane. Plays a critical role in the incorporation of lipoproteins in the outer membrane after they are released by the LolA protein. The chain is Outer-membrane lipoprotein LolB from Shewanella sp. (strain MR-4).